The sequence spans 429 residues: Glucose-1-phosphate adenylyltransferase (429 aa).

Alpha-D-glucose 1-phosphate is bound by residues Tyr116, Gly181, 196–197, and Ser214; that span reads EK.

The protein belongs to the bacterial/plant glucose-1-phosphate adenylyltransferase family. In terms of assembly, homotetramer.

The catalysed reaction is alpha-D-glucose 1-phosphate + ATP + H(+) = ADP-alpha-D-glucose + diphosphate. It functions in the pathway glycan biosynthesis; glycogen biosynthesis. Involved in the biosynthesis of ADP-glucose, a building block required for the elongation reactions to produce glycogen. Catalyzes the reaction between ATP and alpha-D-glucose 1-phosphate (G1P) to produce pyrophosphate and ADP-Glc. The protein is Glucose-1-phosphate adenylyltransferase of Paramagnetospirillum magneticum (strain ATCC 700264 / AMB-1) (Magnetospirillum magneticum).